We begin with the raw amino-acid sequence, 271 residues long: D-methionine-binding lipoprotein MetQ (271 aa).

Residues 1-22 (MSLKFKSIAAISALIGTLTLVG) form the signal peptide. Cys-23 is lipidated: N-palmitoyl cysteine. Cys-23 carries S-diacylglycerol cysteine lipidation.

The protein belongs to the NlpA lipoprotein family.

It localises to the cell membrane. This protein is a component of a D-methionine permease, a binding protein-dependent, ATP-driven transport system. The polypeptide is D-methionine-binding lipoprotein MetQ (metQ) (Yersinia pestis).